We begin with the raw amino-acid sequence, 511 residues long: Alpha-amylase 1 (511 aa).

The signal sequence occupies residues 1-15 (MKFFLLLSLIGFCWA). Position 16 is a pyrrolidone carboxylic acid (Gln16). 3 cysteine pairs are disulfide-bonded: Cys43-Cys101, Cys85-Cys130, and Cys156-Cys175. 3 residues coordinate Ca(2+): Asn115, Arg173, and Asp182. Arg210 serves as a coordination point for chloride. Residue Asp212 is the Nucleophile of the active site. A Ca(2+)-binding site is contributed by His216. Catalysis depends on Glu248, which acts as the Proton donor. 2 residues coordinate chloride: Asn313 and Arg352. Disulfide bonds link Cys393/Cys399 and Cys465/Cys477.

It belongs to the glycosyl hydrolase 13 family. Monomer. Requires Ca(2+) as cofactor. Chloride serves as cofactor. In terms of tissue distribution, expressed in liver and saliva.

The protein resides in the secreted. The enzyme catalyses Endohydrolysis of (1-&gt;4)-alpha-D-glucosidic linkages in polysaccharides containing three or more (1-&gt;4)-alpha-linked D-glucose units.. The chain is Alpha-amylase 1 (Amy1) from Mus musculus (Mouse).